Reading from the N-terminus, the 318-residue chain is Ribosomal RNA small subunit methyltransferase H (318 aa).

Residues 34 to 36 (GGH), aspartate 57, leucine 91, aspartate 110, and glutamine 117 contribute to the S-adenosyl-L-methionine site.

It belongs to the methyltransferase superfamily. RsmH family.

The protein localises to the cytoplasm. The enzyme catalyses cytidine(1402) in 16S rRNA + S-adenosyl-L-methionine = N(4)-methylcytidine(1402) in 16S rRNA + S-adenosyl-L-homocysteine + H(+). In terms of biological role, specifically methylates the N4 position of cytidine in position 1402 (C1402) of 16S rRNA. The chain is Ribosomal RNA small subunit methyltransferase H from Chlorobaculum parvum (strain DSM 263 / NCIMB 8327) (Chlorobium vibrioforme subsp. thiosulfatophilum).